We begin with the raw amino-acid sequence, 947 residues long: Receptor-like protein 56 (947 aa).

An N-terminal signal peptide occupies residues 1-27 (MEGKVFSGQKLILVMLLLGHLHGFSSC). At 28–899 (IEKERKALLE…EDDKEVAIDM (872 aa)) the chain is on the extracellular side. N-linked (GlcNAc...) asparagine glycans are attached at residues N60, N75, and N98. 9 LRR repeats span residues 105-128 (FEEV…VEGY), 134-157 (LRNL…FLNA), 159-182 (TSLT…ELKN), 183-207 (LTNL…EFPY), 209-232 (KKLK…GLKN), 233-257 (LTNL…VFCE), 259-281 (KNLQ…CFGN), 282-305 (LNKL…SFSS), and 307-330 (ESLE…PLTN). N141, N148, and N182 each carry an N-linked (GlcNAc...) asparagine glycan. N-linked (GlcNAc...) asparagine glycosylation is present at N232. N330 carries N-linked (GlcNAc...) asparagine glycosylation. One copy of the LRR 10; degenerate repeat lies at 332–356 (TKLKVFIFSSKDDMVQVKIESTWQP). 18 LRR repeats span residues 357–380 (LFQL…LMYQ), 381–404 (KNLH…LLEN), 405–427 (NPEL…PTSV), 428–450 (HNLQ…NFGR), 452–476 (LPNL…MGEM), 477–500 (YNIS…FVSS), 502–527 (FSLS…NFTS), 529–549 (IVLR…LLTL), 550–575 (VDLC…VFEY), 577–598 (NFLD…SLDN), 600–616 (LFLH…DTFL), 617–640 (GSIQ…VDTQ), 642–663 (ISFL…LCEF), 664–686 (SKMR…CFNN), 757–780 (LNSM…ELGD), 781–804 (LFKL…SFSK), 805–829 (LQDI…LTNL), and 831–854 (SLAI…QFNT). An N-linked (GlcNAc...) asparagine glycan is attached at N415. N459, N478, N488, and N524 each carry an N-linked (GlcNAc...) asparagine glycan. N606 carries N-linked (GlcNAc...) asparagine glycosylation. N686 carries N-linked (GlcNAc...) asparagine glycosylation. N-linked (GlcNAc...) asparagine glycosylation is found at N788, N828, N836, and N841. Residues 900-920 (LVFYWSTAGTYVTALIGILVL) form a helical membrane-spanning segment. Residues 921–947 (MCVDCSWRRAWLRLVDAFIASAKSKLA) are Cytoplasmic-facing.

The protein belongs to the RLP family.

It is found in the cell membrane. This is Receptor-like protein 56 from Arabidopsis thaliana (Mouse-ear cress).